The chain runs to 1577 residues: MAP kinase-activating death domain protein (1577 aa).

The uDENN domain occupies 13-267; that stretch reads YLVIVGARHP…VPVSGQKRVD (255 aa). Residues 106–121 show a composition bias toward basic and acidic residues; sequence KEKVEGGAGPRGKEGA. The segment at 106 to 166 is disordered; the sequence is KEKVEGGAGP…WGKRRAKAGS (61 aa). The span at 123–140 shows a compositional bias: low complexity; it reads TSGASEEAATGSSESGST. The segment covering 141–156 has biased composition (polar residues); it reads LQPPSADSTPDINQSP. At Ser155 the chain carries Phosphoserine. One can recognise a cDENN domain in the interval 288-428; that stretch reads RFTLVDFPLH…ESLELKKHLK (141 aa). One can recognise a dDENN domain in the interval 430–564; the sequence is ALASMSLNTQ…LNPSNYAFQR (135 aa). Disordered regions lie at residues 604 to 635 and 676 to 840; these read LSVPPERDSDSDPTEDSGSDSQDYDDSSSSYS and QPQK…NSTE. Over residues 614 to 629 the composition is skewed to acidic residues; that stretch reads SDPTEDSGSDSQDYDD. Ser688 and Ser691 each carry phosphoserine. Residues 688–698 show a composition bias toward polar residues; it reads SENSQENPPLR. Over residues 699–715 the composition is skewed to low complexity; it reads SSSSTTASSSPSTVVHS. Residues 793 to 803 show a composition bias toward polar residues; sequence PRFSQHVSGSR. A phosphoserine mark is found at Ser812, Ser817, and Ser819. The segment covering 826-839 has biased composition (low complexity); sequence RASSPNSTVSNNST. Phosphoserine is present on residues Ser857, Ser861, Ser915, Ser920, Ser929, and Ser1058. Disordered stretches follow at residues 912-940, 1050-1109, and 1127-1272; these read QKSSVIKHSPTVKREPSSPQGRSSNSSEN, KEPD…DTRS, and EVKK…RSSE. Residues 928–938 are compositionally biased toward low complexity; it reads SSPQGRSSNSS. A phosphothreonine mark is found at Thr1060 and Thr1065. Residue Ser1109 is modified to Phosphoserine. Basic and acidic residues predominate over residues 1127 to 1141; that stretch reads EVKKQKALEKQRPEG. Polar residues predominate over residues 1157-1172; the sequence is QMSADSGVSLTSASQR. A compositionally biased stretch (low complexity) spans 1189-1203; it reads SSSQDSEVSTVSNSS. A compositionally biased stretch (polar residues) spans 1232 to 1248; sequence SRATLSDSEIETNSATS. Thr1235 is subject to Phosphothreonine. A phosphoserine mark is found at Ser1237 and Ser1266. One can recognise a Death domain in the interval 1336–1411; it reads GMDQGPQEMI…GLVYSQQVNE (76 aa).

It belongs to the MADD family. Interacts (via death domain) with TNFRSF1A (via death domain). Interacts with PIDD1. Interacts with YWHAZ. Interacts (via death domain) with KIF1B; links the motor KIF1B to Rab3-carrying vesicles in anterograde synaptic vesicle transport. Interacts with KIF1A. Interacts (via uDENN domain) with RAB3A, RAB3B, RAB3C and RAB3D; the GTP-bound form of the Rab proteins is preferred for interaction. In terms of tissue distribution, expressed in the brain.

It is found in the cell membrane. The protein resides in the cytoplasm. The protein localises to the cell projection. Its subcellular location is the axon. In terms of biological role, guanyl-nucleotide exchange factor that regulates small GTPases of the Rab family. Converts GDP-bound inactive form of RAB27A and RAB27B to the GTP-bound active forms. Converts GDP-bound inactive form of RAB3A, RAB3C and RAB3D to the GTP-bound active forms, GTPases involved in synaptic vesicle exocytosis and vesicle secretion. Plays a role in synaptic vesicle formation and in vesicle trafficking at the neuromuscular junction. Involved in up-regulating a post-docking step of synaptic exocytosis in central synapses. Probably by binding to the motor proteins KIF1B and KIF1A, mediates motor-dependent transport of GTP-RAB3A-positive vesicles to the presynaptic nerve terminals. Plays a role in TNFA-mediated activation of the MAPK pathway, including ERK1/2. May link TNFRSF1A with MAP kinase activation. May be involved in the regulation of TNFA-induced apoptosis. This chain is MAP kinase-activating death domain protein, found in Mus musculus (Mouse).